A 394-amino-acid polypeptide reads, in one-letter code: Putative agmatinase 1 (394 aa).

Residues 1–20 form the signal peptide; it reads MALQSLFLILLAGAAQLAQA. H186, D209, H211, D213, D307, and D309 together coordinate Mn(2+).

Belongs to the arginase family. Mn(2+) is required as a cofactor.

The catalysed reaction is agmatine + H2O = urea + putrescine. This Schizosaccharomyces pombe (strain 972 / ATCC 24843) (Fission yeast) protein is Putative agmatinase 1.